A 94-amino-acid chain; its full sequence is Pyrimidine/purine nucleoside phosphorylase (94 aa).

Belongs to the nucleoside phosphorylase PpnP family.

It carries out the reaction a purine D-ribonucleoside + phosphate = a purine nucleobase + alpha-D-ribose 1-phosphate. The catalysed reaction is adenosine + phosphate = alpha-D-ribose 1-phosphate + adenine. It catalyses the reaction cytidine + phosphate = cytosine + alpha-D-ribose 1-phosphate. The enzyme catalyses guanosine + phosphate = alpha-D-ribose 1-phosphate + guanine. It carries out the reaction inosine + phosphate = alpha-D-ribose 1-phosphate + hypoxanthine. The catalysed reaction is thymidine + phosphate = 2-deoxy-alpha-D-ribose 1-phosphate + thymine. It catalyses the reaction uridine + phosphate = alpha-D-ribose 1-phosphate + uracil. The enzyme catalyses xanthosine + phosphate = alpha-D-ribose 1-phosphate + xanthine. Functionally, catalyzes the phosphorolysis of diverse nucleosides, yielding D-ribose 1-phosphate and the respective free bases. Can use uridine, adenosine, guanosine, cytidine, thymidine, inosine and xanthosine as substrates. Also catalyzes the reverse reactions. This is Pyrimidine/purine nucleoside phosphorylase from Aeromonas salmonicida (strain A449).